The chain runs to 462 residues: Glycine--tRNA ligase (462 aa).

The substrate site is built by arginine 100 and glutamate 174. ATP contacts are provided by residues 206–208 (RNE), 216–221 (FRTREF), 290–291 (EL), and 334–337 (GADR). Position 221 to 225 (221 to 225 (FEQME)) interacts with substrate. 330 to 334 (EPSLG) contributes to the substrate binding site.

Belongs to the class-II aminoacyl-tRNA synthetase family. In terms of assembly, homodimer.

It localises to the cytoplasm. The catalysed reaction is tRNA(Gly) + glycine + ATP = glycyl-tRNA(Gly) + AMP + diphosphate. Its function is as follows. Catalyzes the attachment of glycine to tRNA(Gly). This Acetivibrio thermocellus (strain ATCC 27405 / DSM 1237 / JCM 9322 / NBRC 103400 / NCIMB 10682 / NRRL B-4536 / VPI 7372) (Clostridium thermocellum) protein is Glycine--tRNA ligase.